The sequence spans 198 residues: Recombination protein RecR (198 aa).

The segment at 57–72 adopts a C4-type zinc-finger fold; that stretch reads CPVCFNITDAERCDVC. The region spanning 80-173 is the Toprim domain; sequence NLICVVEEPG…VVSRIAYGLP (94 aa).

This sequence belongs to the RecR family.

Its function is as follows. May play a role in DNA repair. It seems to be involved in an RecBC-independent recombinational process of DNA repair. It may act with RecF and RecO. This chain is Recombination protein RecR, found in Deinococcus deserti (strain DSM 17065 / CIP 109153 / LMG 22923 / VCD115).